A 254-amino-acid polypeptide reads, in one-letter code: 3-deoxy-manno-octulosonate cytidylyltransferase (254 aa).

The protein belongs to the KdsB family.

It is found in the cytoplasm. It carries out the reaction 3-deoxy-alpha-D-manno-oct-2-ulosonate + CTP = CMP-3-deoxy-beta-D-manno-octulosonate + diphosphate. Its pathway is nucleotide-sugar biosynthesis; CMP-3-deoxy-D-manno-octulosonate biosynthesis; CMP-3-deoxy-D-manno-octulosonate from 3-deoxy-D-manno-octulosonate and CTP: step 1/1. The protein operates within bacterial outer membrane biogenesis; lipopolysaccharide biosynthesis. In terms of biological role, activates KDO (a required 8-carbon sugar) for incorporation into bacterial lipopolysaccharide in Gram-negative bacteria. This Chlamydia trachomatis serovar A (strain ATCC VR-571B / DSM 19440 / HAR-13) protein is 3-deoxy-manno-octulosonate cytidylyltransferase.